We begin with the raw amino-acid sequence, 115 residues long: Thionin-like protein 2 (115 aa).

An N-terminal signal peptide occupies residues 1 to 20 (MLVAVMIVMVIGNLLAQTAA).

This sequence belongs to the plant thionin (TC 1.C.44) family. Post-translationally, is disulfide-linked.

It is found in the secreted. Functionally, may be involved in plant defense. The polypeptide is Thionin-like protein 2 (Arabidopsis thaliana (Mouse-ear cress)).